The chain runs to 290 residues: Tegument protein VP22 (290 aa).

Residues 98–112 are compositionally biased toward polar residues; the sequence is STSHGRLSPTKTTPH. The tract at residues 98-156 is disordered; it reads STSHGRLSPTKTTPHPKSAGVTPPQRVPARPATRAAAPSATPTQPDCVAKQRTSPGVNS. Low complexity predominate over residues 118–142; the sequence is VTPPQRVPARPATRAAAPSATPTQP. Residues 146 to 149 carry the Nuclear localization signal motif; the sequence is AKQR. Positions 219–231 match the Nuclear export signal motif; the sequence is LDRFLKAAAIRIL.

This sequence belongs to the alphaherpesvirinae VP22 tegument protein family. As to quaternary structure, interacts with gE (via C-terminus); this interaction is necessary for the recruitment of VP22 to the Golgi and its packaging into virions. Interacts with gM (via C-terminus). Interacts with VP16; this interaction allows the formation of a tripartite complex composed of VP16, VP22 and UL41/VHS. Interacts with the capsid-binding protein UL16. Interacts with host CGAS. Post-translationally, highly phosphorylated in the host cell. Packaging is selective for underphosphorylated forms.

It is found in the virion tegument. Its subcellular location is the host cytoplasm. The protein localises to the host nucleus. The protein resides in the host Golgi apparatus. Its function is as follows. Tegument protein that plays different roles during the time course of infection. Participates in both the accumulation of viral mRNAs and viral protein translation at late time of infection. Modulates the RNase activity of the virion host shutoff protein UL41 probably to ensure necessary levels of key cellular mRNAs and proteins. Plays a role in microtubule reorganization that occurs after viral infection by stabilizing microtubule network. Plays a role in the inhibition of host innate immune system by targeting the CGAS enzymatic activity which is the principal cytosolic DNA sensor that detects invading viral DNA. Acts by mediating disruption of liquid-like droplets in which CGAS is activated, thereby preventing CGAS activity. The chain is Tegument protein VP22 (11) from Equus caballus (Horse).